A 203-amino-acid polypeptide reads, in one-letter code: LexA repressor (203 aa).

A DNA-binding region (H-T-H motif) is located at residues 28–48; that stretch reads VRELCDELGFKSPNTAHFHLK. Residues Ser122 and Lys159 each act as for autocatalytic cleavage activity in the active site.

It belongs to the peptidase S24 family. As to quaternary structure, homodimer.

The catalysed reaction is Hydrolysis of Ala-|-Gly bond in repressor LexA.. Its function is as follows. Represses a number of genes involved in the response to DNA damage (SOS response), including recA and lexA. In the presence of single-stranded DNA, RecA interacts with LexA causing an autocatalytic cleavage which disrupts the DNA-binding part of LexA, leading to derepression of the SOS regulon and eventually DNA repair. This chain is LexA repressor, found in Desulfatibacillum aliphaticivorans.